The sequence spans 343 residues: L-ornithine/L-arginine 3-hydroxylase (343 aa).

Residues H147 and E149 each coordinate Fe cation. Residues 199–215 (MPDNSHLPQNTAESTGD) are compositionally biased toward polar residues. Residues 199 to 218 (MPDNSHLPQNTAESTGDPTK) are disordered. H302 provides a ligand contact to Fe cation. R316 serves as a coordination point for 2-oxoglutarate.

This sequence belongs to the clavaminate synthase family. The cofactor is Fe(2+).

It carries out the reaction L-ornithine + 2-oxoglutarate + O2 = (3S)-3-hydroxy-L-ornithine + succinate + CO2. The enzyme catalyses L-arginine + 2-oxoglutarate + O2 = (2S,3S)-hydroxyarginine + succinate + CO2. Alpha-ketoglutarate-dependent dioxygenase that in vitro catalyzes the regio- and stereoselective hydroxylation of L-ornithine and L-arginine, leading to (3S)-3-hydroxy-L-ornithine and (3S)-3-hydroxy-L-arginine, respectively. Cannot use L-lysine, D-ornithine, or D-arginine as substrate. The sequence is that of L-ornithine/L-arginine 3-hydroxylase from Catenulispora acidiphila (strain DSM 44928 / JCM 14897 / NBRC 102108 / NRRL B-24433 / ID139908).